The primary structure comprises 895 residues: Dystroglycan 1 (895 aa).

Residues 1 to 29 (MRMSVGSAVPLPLWGRTFLLLLSVAVTQS) form the signal peptide. The required for laminin recognition stretch occupies residues 30–408 (HWPSEPSEAV…SQIRPTMTIP (379 aa)). Residues 49 to 71 (SMHSALSDLHETVPTVVGIPDGT) are O-glycosylated at one site. Asparagine 141 carries an N-linked (GlcNAc...) asparagine glycan. An intrachain disulfide couples cysteine 182 to cysteine 264. The mucin-like domain stretch occupies residues 316-485 (ATPTPVTAIG…PATRMRTTTS (170 aa)). Residues threonine 317, threonine 319, and threonine 379 are each glycosylated (O-linked (Man6P...) threonine). The tract at residues 381-500 (TLGPIQPTRV…GEPNQRPELK (120 aa)) is disordered. Polar residues predominate over residues 393 to 403 (AGTTVPSQIRP). Positions 413-447 (PSTVTTPPTTTTKKPRVSTPRPATPSTDSSTTTTR) are enriched in low complexity. Residues 463-485 (TTKAPITRLETASPATRMRTTTS) are O-glycosylated at seven sites with GalNAc. In terms of domain architecture, Peptidase S72 spans 603–712 (KAPARFKAKL…MSITVTGSGS (110 aa)). N-linked (GlcNAc...) asparagine glycans are attached at residues asparagine 641, asparagine 649, and asparagine 661. At 654-749 (SIVVEWTNNT…DPEKSSEDDV (96 aa)) the chain is on the extracellular side. Cysteine 669 and cysteine 713 are disulfide-bonded. Residues 724–747 (PMRVPSEAPATEVPDRDPEKSSED) form a disordered region. Positions 736 to 747 (VPDRDPEKSSED) are enriched in basic and acidic residues. Residues 750–775 (YLHTVIPAVVVAAILLIAGIIAMICY) form a helical membrane-spanning segment. A Nuclear localization signal motif is present at residues 776–782 (RKKRKGK). Over 776–895 (RKKRKGKLTL…YRSPPPYVPP (120 aa)) the chain is Cytoplasmic. Threonine 790 bears the Phosphothreonine mark. The tract at residues 819-895 (LQEEKAPLPP…YRSPPPYVPP (77 aa)) is required for interaction with CAV3. The segment at 823–895 (KAPLPPPEYP…YRSPPPYVPP (73 aa)) is disordered. A compositionally biased stretch (polar residues) spans 832-846 (PNQSMPETTPLNQDT). Pro residues predominate over residues 859–870 (SAPPYQPPPPFT). The required for binding DMD and UTRN stretch occupies residues 880–895 (PKNMTPYRSPPPYVPP). The PPXY motif signature appears at 889–892 (PPPY). Tyrosine 892 carries the post-translational modification Phosphotyrosine; by SRC.

In terms of assembly, monomer. Heterodimer of alpha- and beta-dystroglycan subunits which are the central components of the dystrophin-glycoprotein complex. This complex then can form a dystrophin-associated glycoprotein complex (DGC) which is composed of three subcomplexes: a cytoplasmic complex comprised of DMD (or UTRN), DTNA and a number of syntrophins, such as SNTB1, SNTB2, SNTG1 and SNTG2, the transmembrane dystroglycan complex, and the sarcoglycan-sarcospan complex. Interacts (via the N-terminal of alphaDAG1) with LARGE1; the interaction enhances laminin binding. Interacts with SGCD. Interacts with AGR2 and AGR3. Interacts (betaDAG1) with DMD; the interaction is inhibited by phosphorylation on the PPXY motif. Interacts (betaDAG1, via its PPXY motif) with UTRN (via its WWW and ZZ domains); the interaction is inhibited by phosphorylation on the PPXY motif. Interacts (betaDAG1, via its phosphorylated PPXY motif) with the SH2 domain-containing proteins, FYN, CSK, NCK and SHC. Interacts (betaDAG1) with CAV3 (via a central WW-like domain); the interaction disrupts the binding of DMD. BetaDAG1 directly interacts with ANK3, but not with ANK2; this interaction does not interfere with DMD-binding and is required for retention at costameres. Identified in a dystroglycan complex that contains at least PRX, DRP2, UTRN, DMD and DAG1. Interacts with POMGNT1. BetaDAG1 interacts with CD93. In terms of processing, O-glycosylated. POMGNT1 catalyzes the initial addition of N-acetylglucosamine, giving rise to the GlcNAc(beta1-2)Man(alpha1-)O-Ser/Thr moiety and thus providing the necessary basis for the addition of further carbohydrate moieties. Heavily O-glycosylated comprising of up to two thirds of its mass and the carbohydrate composition differs depending on tissue type. Mucin-type O-glycosylation is important for ligand binding activity. O-mannosylation is found in high abundance in both brain and muscle where the most abundant glycan is Sia-alpha-2-3-Gal-beta-1-4-Glc-NAc-beta-1-2-Man. In muscle, glycosylation on Thr-317, Thr-319 and Thr-379 by a phosphorylated O-mannosyl glycan with the structure 2-(N-acetylamido)-2-deoxygalactosyl-beta-1,3-2-(N-acetylamido)-2-deoxyglucosyl-beta-1,4-6-phosphomannose is mediated by like-acetylglucosaminyltransferase (LARGE1) protein amd is required for laminin binding. O-glycosylated in the N-terminal region with a core 1 or possibly core 8 glycan. The brain form displays a unique glycosylation pattern which is absent in other tissues; this form shows enhanced binding to laminin LAMA5 compared to the skeletal muscle form. Post-translationally, N-glycosylated. Autolytic cleavage produces the alpha and beta subunits. In cutaneous cells, as well as in certain pathological conditions, shedding of beta-dystroglycan can occur releasing a peptide of about 30 kDa. In terms of processing, SRC-mediated phosphorylation of the PPXY motif of the beta subunit recruits SH2 domain-containing proteins, but inhibits binding to WWW domain-containing proteins, DMD and UTRN. This phosphorylation also inhibits nuclear entry. Expressed in brain (at protein level). Expressed in the myelin sheath of peripheral nerves.

The protein localises to the secreted. The protein resides in the extracellular space. It is found in the cell membrane. It localises to the cytoplasm. Its subcellular location is the cytoskeleton. The protein localises to the nucleus. The protein resides in the nucleoplasm. It is found in the sarcolemma. It localises to the postsynaptic cell membrane. Functionally, the dystroglycan complex is involved in a number of processes including laminin and basement membrane assembly, sarcolemmal stability, cell survival, peripheral nerve myelination, nodal structure, cell migration, and epithelial polarization. Its function is as follows. Extracellular peripheral glycoprotein that acts as a receptor for extracellular matrix proteins containing laminin-G domains. Receptor for laminin-2 (LAMA2) and agrin in peripheral nerve Schwann cells. Also acts as a receptor for laminin LAMA5. Transmembrane protein that plays important roles in connecting the extracellular matrix to the cytoskeleton. Acts as a cell adhesion receptor in both muscle and non-muscle tissues. Receptor for both DMD and UTRN and, through these interactions, scaffolds axin to the cytoskeleton. Also functions in cell adhesion-mediated signaling and implicated in cell polarity. The sequence is that of Dystroglycan 1 from Bos taurus (Bovine).